Reading from the N-terminus, the 644-residue chain is Exoribonuclease 2 (644 aa).

Residues 189-516 enclose the RNB domain; it reads REDLTALDFV…NHRLLKAVIK (328 aa). In terms of domain architecture, S1 motif spans 561 to 643; sequence DTRFAAEIVD…ETRSIIARPV (83 aa).

It belongs to the RNR ribonuclease family. RNase II subfamily.

The protein localises to the cytoplasm. The catalysed reaction is Exonucleolytic cleavage in the 3'- to 5'-direction to yield nucleoside 5'-phosphates.. Functionally, involved in mRNA degradation. Hydrolyzes single-stranded polyribonucleotides processively in the 3' to 5' direction. The sequence is that of Exoribonuclease 2 from Escherichia coli O6:K15:H31 (strain 536 / UPEC).